A 247-amino-acid polypeptide reads, in one-letter code: Adenosylcobinamide-GDP ribazoletransferase (247 aa).

The next 5 helical transmembrane spans lie at I34 to V54, C59 to F79, G113 to L133, I138 to Y158, and V194 to I214.

The protein belongs to the CobS family. It depends on Mg(2+) as a cofactor.

It is found in the cell inner membrane. The catalysed reaction is alpha-ribazole + adenosylcob(III)inamide-GDP = adenosylcob(III)alamin + GMP + H(+). The enzyme catalyses alpha-ribazole 5'-phosphate + adenosylcob(III)inamide-GDP = adenosylcob(III)alamin 5'-phosphate + GMP + H(+). The protein operates within cofactor biosynthesis; adenosylcobalamin biosynthesis; adenosylcobalamin from cob(II)yrinate a,c-diamide: step 7/7. Functionally, joins adenosylcobinamide-GDP and alpha-ribazole to generate adenosylcobalamin (Ado-cobalamin). Also synthesizes adenosylcobalamin 5'-phosphate from adenosylcobinamide-GDP and alpha-ribazole 5'-phosphate. This Escherichia coli O81 (strain ED1a) protein is Adenosylcobinamide-GDP ribazoletransferase.